Consider the following 409-residue polypeptide: Dual-specificity RNA methyltransferase RlmN (409 aa).

The active-site Proton acceptor is the Glu121. One can recognise a Radical SAM core domain in the interval 127–376; the sequence is EEGRGTLCIS…IRTPRGRDIL (250 aa). Cysteines 134 and 379 form a disulfide. The [4Fe-4S] cluster site is built by Cys141, Cys145, and Cys148. S-adenosyl-L-methionine-binding positions include 205-206, Ser237, 259-261, and Asn336; these read GE and SLH. Catalysis depends on Cys379, which acts as the S-methylcysteine intermediate.

It belongs to the radical SAM superfamily. RlmN family. Requires [4Fe-4S] cluster as cofactor.

It localises to the cytoplasm. The enzyme catalyses adenosine(2503) in 23S rRNA + 2 reduced [2Fe-2S]-[ferredoxin] + 2 S-adenosyl-L-methionine = 2-methyladenosine(2503) in 23S rRNA + 5'-deoxyadenosine + L-methionine + 2 oxidized [2Fe-2S]-[ferredoxin] + S-adenosyl-L-homocysteine. It carries out the reaction adenosine(37) in tRNA + 2 reduced [2Fe-2S]-[ferredoxin] + 2 S-adenosyl-L-methionine = 2-methyladenosine(37) in tRNA + 5'-deoxyadenosine + L-methionine + 2 oxidized [2Fe-2S]-[ferredoxin] + S-adenosyl-L-homocysteine. Functionally, specifically methylates position 2 of adenine 2503 in 23S rRNA and position 2 of adenine 37 in tRNAs. m2A2503 modification seems to play a crucial role in the proofreading step occurring at the peptidyl transferase center and thus would serve to optimize ribosomal fidelity. In Rhizobium etli (strain ATCC 51251 / DSM 11541 / JCM 21823 / NBRC 15573 / CFN 42), this protein is Dual-specificity RNA methyltransferase RlmN.